A 337-amino-acid polypeptide reads, in one-letter code: Visual pigment-like receptor peropsin (337 aa).

Residues 1–26 (MLSEASDFNSSGSRSEGSVFSRTEHS) are Extracellular-facing. N-linked (GlcNAc...) asparagine glycosylation occurs at Asn9. The helical transmembrane segment at 27–49 (VIAAYLIVAGITSILSNVVVLGI) threads the bilayer. Topologically, residues 50-61 (FIKYKELRTPTN) are cytoplasmic. The helical transmembrane segment at 62 to 87 (AVIINLAFTDIGVSSIGYPMSAASDL) threads the bilayer. Residues 88–101 (HGSWKFGHAGCQIY) lie on the Extracellular side of the membrane. A disulfide bond links Cys98 and Cys175. The helical transmembrane segment at 102 to 121 (AGLNIFFGMVSIGLLTVVAM) threads the bilayer. At 122–140 (DRYLTISCPDVGRRMTTNT) the chain is on the cytoplasmic side. The chain crosses the membrane as a helical span at residues 141-164 (YLSMILGAWINGLFWALMPIIGWA). The Extracellular portion of the chain corresponds to 165 to 188 (SYAPDPTGATCTINWRNNDTSFVS). N-linked (GlcNAc...) asparagine glycosylation occurs at Asn182. The helical transmembrane segment at 189-212 (YTMMVIVVNFIVPLTVMFYCYYHV) threads the bilayer. Residues 213–240 (SRSLRLYAASDCTAHLHRDWADQADVTK) are Cytoplasmic-facing. Residues 241–264 (MSVIMILMFLLAWSPYSIVCLWAC) form a helical membrane-spanning segment. At 265–272 (FGNPKKIP) the chain is on the extracellular side. A helical transmembrane segment spans residues 273-297 (PSMAIIAPLFAKSSTFYNPCIYVAA). Lys284 is modified (N6-(retinylidene)lysine). The Cytoplasmic portion of the chain corresponds to 298-337 (HKKFRKAMLAMFKCQPHLAVPEPSTLPMDMPQSSLAPVRI).

It belongs to the G-protein coupled receptor 1 family. Opsin subfamily. As to expression, found only in the eye, where it is localized to the retinal pigment epithelium (RPE). In the RPE, it is localized to the microvilli that surround the photoreceptor outer segments.

It localises to the membrane. May play a role in rpe physiology either by detecting light directly or by monitoring the concentration of retinoids or other photoreceptor-derived compounds. The chain is Visual pigment-like receptor peropsin (Rrh) from Mus musculus (Mouse).